Reading from the N-terminus, the 467-residue chain is SEPTMSTRVQQATSCVLLIIGCTNYAASKQQTENNAVCDTPCKCLGRLAVQKAYLEGALEHARQSIKAFASSSRQHTIAAGATNTKLSGHHPNQGRRGRRRSSSARPNNSKGNSPSKRAGGAVRGETPASGRLKAAKLLKSSNYETATFTPTEMTIQNRRACEQVDESKEYRFDELNFDKEQGIPTPALTLEISMGCQKNPGDTGGACDGTNADDGVVTKLTFTTAAPVAETSPLVAGAYKKTSKASLSISNRTEEGRVANSKAAHEAAKRLMAIKQPSDLSTYTDDSSFALLVGQLAMKPPLGAELTPALRDQVNKFITDNYGANEGDFRSKFLAKTEQAAVFYLDGKSKKTKKISELESKSELVTASGYAFFKGIHTEQAEKVENPRSQGNPETAENKKEGGNTAKPFCSTIQNQTECEGVKGTPPTGKAKVCGWIEGKCQDSSFLLSKQFALSVVSAAFAALLF.

Residues Thr77–Leu87 are compositionally biased toward polar residues. The tract at residues Thr77–Leu133 is disordered. Over residues Asn93–Ser103 the composition is skewed to basic residues. The segment covering Pro107–Ser116 has biased composition (polar residues). N-linked (GlcNAc...) asparagine glycans are attached at residues Asn108 and Asn252. The disordered stretch occupies residues Ala382–Ala407. Asn416 is a glycosylation site (N-linked (GlcNAc...) asparagine). Asp444 carries the GPI-anchor amidated aspartate lipid modification. Positions Ser445 to Phe467 are cleaved as a propeptide — removed in mature form.

It localises to the cell membrane. In terms of biological role, VSG forms a coat on the surface of the parasite. The trypanosome evades the immune response of the host by expressing a series of antigenically distinct VSGs from an estimated 1000 VSG genes. The protein is Variant surface glycoprotein 7 of Trypanosoma brucei rhodesiense.